A 548-amino-acid polypeptide reads, in one-letter code: Membrane protein insertase YidC (548 aa).

Residues asparagine 6–aspartate 26 form a helical membrane-spanning segment. The disordered stretch occupies residues asparagine 28–serine 55. Over residues glutamine 30–glutamine 50 the composition is skewed to low complexity. Helical transmembrane passes span phenylalanine 350–tyrosine 370, leucine 420–leucine 440, leucine 458–isoleucine 478, and proline 499–valine 519.

The protein belongs to the OXA1/ALB3/YidC family. Type 1 subfamily. Interacts with the Sec translocase complex via SecD. Specifically interacts with transmembrane segments of nascent integral membrane proteins during membrane integration.

It localises to the cell inner membrane. Its function is as follows. Required for the insertion and/or proper folding and/or complex formation of integral membrane proteins into the membrane. Involved in integration of membrane proteins that insert both dependently and independently of the Sec translocase complex, as well as at least some lipoproteins. Aids folding of multispanning membrane proteins. The chain is Membrane protein insertase YidC from Escherichia fergusonii (strain ATCC 35469 / DSM 13698 / CCUG 18766 / IAM 14443 / JCM 21226 / LMG 7866 / NBRC 102419 / NCTC 12128 / CDC 0568-73).